Reading from the N-terminus, the 348-residue chain is Oxidase ucsJ (348 aa).

Belongs to the avfA family.

The protein operates within mycotoxin biosynthesis. Oxidase; part of the gene cluster that mediates the biosynthesis of UCS1025A, a member of the pyrrolizidinone family that acts as a strong telomerase inhibitor and displays potent antibacterial and antitumor properties. These compounds share a hemiaminal-containing pyrrolizidinone core fused with a gamma-lactone, giving a furopyrrolizidine that is connected to a decalin fragment. The polyketide synthase module (PKS) of the PKS-NRPS ucsA is responsible for the synthesis of the polyketide backbone via the condensation of an acetyl-CoA starter unit with 6 malonyl-CoA units. The downstream nonribosomal peptide synthetase (NRPS) module then amidates the carboxyl end of the polyketide with a 2S,3S-methylproline derived from L-isoleucine by the 2-oxoglutarate-dependent dioxygenase ucsF which converts L-isoleucine to (4S,5S)-4-methylpyrroline-5-carboxylate that is further converted to 2S,3S-methylproline by the pyrroline-5-carboxylate reductase ucsG. Reductive release of the completed aminoacyl polyketide from the assembly line can form the 3-pyrrolin-2-one structure via an intramolecular Knoevenagel reaction. Because ucsA lacks a designated enoylreductase (ER) domain, the required activity is provided the enoyl reductase ucsL. This keto acyclic precursor is the substrate of the Diels-Alderase ucsH, that catalyzes the Diels-Alder cycloaddition. Oxidation of the 3S-methyl group to a carboxylate by the cytochrome P450 monooxygenase ucsK allows an oxa-Michael cyclization that might involve the reductase/dehydrogenase ucsI and which furnishes the furopyrrolizidine. The oxidase ucsJ likely plays a critical role in stereoselective reduction of the C5-C6 double bond to afford the required R-configured carboxylate group. Further enolization and oxidation at C5 by an unidentified enzyme affords the last intermediate that can undergo oxa-Michael cyclization to yield UCS1025A. The polypeptide is Oxidase ucsJ (Acremonium sp).